The following is a 425-amino-acid chain: tRNA(Ile)-lysidine synthase (425 aa).

37–42 (SGGKDS) is an ATP binding site.

This sequence belongs to the tRNA(Ile)-lysidine synthase family.

The protein localises to the cytoplasm. The catalysed reaction is cytidine(34) in tRNA(Ile2) + L-lysine + ATP = lysidine(34) in tRNA(Ile2) + AMP + diphosphate + H(+). Ligates lysine onto the cytidine present at position 34 of the AUA codon-specific tRNA(Ile) that contains the anticodon CAU, in an ATP-dependent manner. Cytidine is converted to lysidine, thus changing the amino acid specificity of the tRNA from methionine to isoleucine. The protein is tRNA(Ile)-lysidine synthase of Leptospira borgpetersenii serovar Hardjo-bovis (strain JB197).